Reading from the N-terminus, the 1183-residue chain is Translation initiation factor IF-2 (1183 aa).

Disordered stretches follow at residues Lys55 to Ile512 and Ala538 to Arg574. The span at Thr83 to Thr99 shows a compositional bias: basic and acidic residues. Composition is skewed to polar residues over residues Glu100–Ala143 and Lys165–Ser177. The span at Pro220–Pro229 shows a compositional bias: basic and acidic residues. A compositionally biased stretch (polar residues) spans Gln231–Gly252. Low complexity predominate over residues Gln253–Gln267. The segment covering Ile288–Asn304 has biased composition (basic and acidic residues). 2 stretches are compositionally biased toward polar residues: residues Gln324 to Gly349 and Asn357 to Gly367. The segment covering Gly485–Arg499 has biased composition (basic and acidic residues). Basic residues-rich tracts occupy residues Ser544–Asn553 and Leu560–Arg574. One can recognise a tr-type G domain in the interval Arg675–Leu847. A G1 region spans residues Gly684–Thr691. GTP is bound at residue Gly684 to Thr691. Positions Gly709 to His713 are G2. The segment at Asp734–Gly737 is G3. GTP contacts are provided by residues Asp734–His738 and Asn788–Asp791. Residues Asn788–Asp791 form a G4 region. A G5 region spans residues Ser824 to Ile826.

Belongs to the TRAFAC class translation factor GTPase superfamily. Classic translation factor GTPase family. IF-2 subfamily.

It is found in the cytoplasm. One of the essential components for the initiation of protein synthesis. Protects formylmethionyl-tRNA from spontaneous hydrolysis and promotes its binding to the 30S ribosomal subunits. Also involved in the hydrolysis of GTP during the formation of the 70S ribosomal complex. This chain is Translation initiation factor IF-2, found in Prochlorococcus marinus (strain NATL1A).